Consider the following 311-residue polypeptide: Methionyl-tRNA formyltransferase (311 aa).

(6S)-5,6,7,8-tetrahydrofolate is bound at residue S112–P115.

It belongs to the Fmt family.

The catalysed reaction is L-methionyl-tRNA(fMet) + (6R)-10-formyltetrahydrofolate = N-formyl-L-methionyl-tRNA(fMet) + (6S)-5,6,7,8-tetrahydrofolate + H(+). Attaches a formyl group to the free amino group of methionyl-tRNA(fMet). The formyl group appears to play a dual role in the initiator identity of N-formylmethionyl-tRNA by promoting its recognition by IF2 and preventing the misappropriation of this tRNA by the elongation apparatus. The protein is Methionyl-tRNA formyltransferase of Rhizobium meliloti (strain 1021) (Ensifer meliloti).